The primary structure comprises 102 residues: Urease subunit beta (102 aa).

The protein belongs to the urease beta subunit family. Heterotrimer of UreA (gamma), UreB (beta) and UreC (alpha) subunits. Three heterotrimers associate to form the active enzyme.

It is found in the cytoplasm. It catalyses the reaction urea + 2 H2O + H(+) = hydrogencarbonate + 2 NH4(+). Its pathway is nitrogen metabolism; urea degradation; CO(2) and NH(3) from urea (urease route): step 1/1. The polypeptide is Urease subunit beta (Opitutus terrae (strain DSM 11246 / JCM 15787 / PB90-1)).